The following is a 110-amino-acid chain: Snake venom vascular endothelial growth factor toxin HF (110 aa).

Position 1 is a pyrrolidone carboxylic acid (Gln-1). 3 cysteine pairs are disulfide-bonded: Cys-14–Cys-56, Cys-45–Cys-91, and Cys-49–Cys-93.

The protein belongs to the PDGF/VEGF growth factor family. Snake venom VEGF subfamily. As to quaternary structure, homodimer; disulfide-linked. Interacts with VEGF receptor-2 (KDR) with high affinity. As to expression, expressed by the venom gland.

The protein localises to the secreted. Snake venom VEGFs that may contribute to venom dispersion and prey subjugation by inducing vascular permeability and hypotension. This protein induces an increase in capillary permeability after intradermal injection, as well as a drastic hypotensive effect after intravenous injection. The hypotension is mediated by nitric oxide (NO), which is produced by VEGF-activated endothelium NO synthase. Also induces angiogenesis in vitro, probably through VEGF receptor (KDR/VEGFR-2) signaling. The protein is Snake venom vascular endothelial growth factor toxin HF of Vipera aspis aspis (Aspic viper).